The primary structure comprises 107 residues: Phosphoribosyl-ATP pyrophosphatase (107 aa).

It belongs to the PRA-PH family.

It is found in the cytoplasm. It carries out the reaction 1-(5-phospho-beta-D-ribosyl)-ATP + H2O = 1-(5-phospho-beta-D-ribosyl)-5'-AMP + diphosphate + H(+). It participates in amino-acid biosynthesis; L-histidine biosynthesis; L-histidine from 5-phospho-alpha-D-ribose 1-diphosphate: step 2/9. The sequence is that of Phosphoribosyl-ATP pyrophosphatase from Sinorhizobium medicae (strain WSM419) (Ensifer medicae).